The following is a 210-amino-acid chain: Replication protein RepB (210 aa).

The protein belongs to the Gram-positive plasmids replication protein type 2 family.

In terms of biological role, is essential for plasmid replication. Nicks the positive strand at the plus origin of replication. This Streptococcus agalactiae protein is Replication protein RepB (repB).